The chain runs to 311 residues: Serpentine receptor class gamma-6 (311 aa).

The next 7 helical transmembrane spans lie at 24-44, 58-78, 101-121, 148-168, 200-220, 235-255, and 266-286; these read MGQL…IYVI, FWLL…FDIF, PLLI…KMVA, LTAC…NILI, YMQI…AILW, IWFA…YLHM, and IFML…VIMI.

This sequence belongs to the nematode receptor-like protein srg family.

It localises to the membrane. This Caenorhabditis elegans protein is Serpentine receptor class gamma-6 (srg-6).